The following is a 470-amino-acid chain: Asparagine--tRNA ligase (470 aa).

This sequence belongs to the class-II aminoacyl-tRNA synthetase family. In terms of assembly, homodimer.

Its subcellular location is the cytoplasm. It carries out the reaction tRNA(Asn) + L-asparagine + ATP = L-asparaginyl-tRNA(Asn) + AMP + diphosphate + H(+). In Blochmanniella floridana, this protein is Asparagine--tRNA ligase.